The primary structure comprises 229 residues: Deoxyribose-phosphate aldolase (229 aa).

Catalysis depends on aspartate 96, which acts as the Proton donor/acceptor. The active-site Schiff-base intermediate with acetaldehyde is lysine 166. The active-site Proton donor/acceptor is lysine 195.

It belongs to the DeoC/FbaB aldolase family. DeoC type 1 subfamily.

It is found in the cytoplasm. The catalysed reaction is 2-deoxy-D-ribose 5-phosphate = D-glyceraldehyde 3-phosphate + acetaldehyde. The protein operates within carbohydrate degradation; 2-deoxy-D-ribose 1-phosphate degradation; D-glyceraldehyde 3-phosphate and acetaldehyde from 2-deoxy-alpha-D-ribose 1-phosphate: step 2/2. Its function is as follows. Catalyzes a reversible aldol reaction between acetaldehyde and D-glyceraldehyde 3-phosphate to generate 2-deoxy-D-ribose 5-phosphate. The protein is Deoxyribose-phosphate aldolase of Micrococcus luteus (strain ATCC 4698 / DSM 20030 / JCM 1464 / CCM 169 / CCUG 5858 / IAM 1056 / NBRC 3333 / NCIMB 9278 / NCTC 2665 / VKM Ac-2230) (Micrococcus lysodeikticus).